The primary structure comprises 581 residues: Pyridine nucleotide-disulfide oxidoreductase domain-containing protein 2 (581 aa).

Residue Val-38–Gly-71 participates in FAD binding.

It belongs to the carotenoid/retinoid oxidoreductase family. Interacts with COX5B; this interaction may contribute to localize PYROXD2 to the inner face of the inner mitochondrial membrane.

It localises to the mitochondrion matrix. Probable oxidoreductase that may play a role as regulator of mitochondrial function. This Homo sapiens (Human) protein is Pyridine nucleotide-disulfide oxidoreductase domain-containing protein 2.